Consider the following 132-residue polypeptide: Amicyanin (132 aa).

The signal sequence occupies residues 1–26 (MISAKTLRPAIAAIALFAIGATGAWA). At Gln27 the chain carries Pyrrolidone carboxylic acid. Residues 27 to 132 (QDKITVTSEK…PFMRGKVIVE (106 aa)) enclose the Plastocyanin-like domain. 4 residues coordinate Cu cation: His80, Cys119, His122, and Met125.

Requires Cu cation as cofactor.

It localises to the periplasm. It participates in one-carbon metabolism; methylamine degradation. Its function is as follows. Primary acceptor of electrons from methylamine dehydrogenase. Passes those electrons on either a soluble cytochrome c or to pseudoazurin. The chain is Amicyanin (mauC) from Paracoccus versutus (Thiobacillus versutus).